The chain runs to 603 residues: MESDLEFSNIVSVLKLVEATTQRTVMAKALSSLLAKTPPQVIDKVIYFLLGSLRPDWEGVELGLAERLTLRAISMATGLPIRQVEELYKKLGDAGEVAKRAAEIKRSKGGGGTIFDFIDTGPKRRLTISKVYDTLMAIAKASGEGAQDTKVKLLSSLLTDAEPDEAKYITRFVIGRLRLGVADMTILDALSDAFDVNRDLLEKAYHVYPDLGKIAKTLAEGGEEAVKAIKVTPGVPIQPMLAERLSSPKEILNKLGGVAICEFKYDGERMQIHKLKDGTVKIFSRRMEDITNQYPDVAEYAREAIDAEEFIVEGEGVAIDPDTGEFKPFQELMHRKRKHNIKEAIEEYPINLYLFDVMYVNGQDLTDLPLPDRKKVLFSIIKPHEHVHHADWIITDDADSLEKFFLDAISSGCEGVMCKSVKLGSVYEMGARGWLWIKYKRDYKSELSDTMDLVVVGAFWGRGKRAGTYGALLLAAYDPDSDQFYTVCKVGSGFTDEDLKKLPQMLEPYKIPHRHPRVVSKMEPDIWFTPGLVLEITGAEITMSPLHTCCSVMLKGDVGLAIRFPRFTGRYRTDKRPEDATTVKEIFEMYSNQKKVKLTDQVP.

Glu262 is an ATP binding site. The N6-AMP-lysine intermediate role is filled by Lys264. ATP-binding residues include Arg269, Arg285, Glu315, Phe355, Arg432, and Lys438.

Belongs to the ATP-dependent DNA ligase family. Mg(2+) serves as cofactor.

It carries out the reaction ATP + (deoxyribonucleotide)n-3'-hydroxyl + 5'-phospho-(deoxyribonucleotide)m = (deoxyribonucleotide)n+m + AMP + diphosphate.. DNA ligase that seals nicks in double-stranded DNA during DNA replication, DNA recombination and DNA repair. The polypeptide is DNA ligase (Caldivirga maquilingensis (strain ATCC 700844 / DSM 13496 / JCM 10307 / IC-167)).